A 357-amino-acid polypeptide reads, in one-letter code: UDP-N-acetylglucosamine--N-acetylmuramyl-(pentapeptide) pyrophosphoryl-undecaprenol N-acetylglucosamine transferase (357 aa).

Residues 14–16 (TAG), Arg168, Ser198, and Gln292 contribute to the UDP-N-acetyl-alpha-D-glucosamine site.

This sequence belongs to the glycosyltransferase 28 family. MurG subfamily.

It is found in the cell membrane. It catalyses the reaction di-trans,octa-cis-undecaprenyl diphospho-N-acetyl-alpha-D-muramoyl-L-alanyl-D-glutamyl-meso-2,6-diaminopimeloyl-D-alanyl-D-alanine + UDP-N-acetyl-alpha-D-glucosamine = di-trans,octa-cis-undecaprenyl diphospho-[N-acetyl-alpha-D-glucosaminyl-(1-&gt;4)]-N-acetyl-alpha-D-muramoyl-L-alanyl-D-glutamyl-meso-2,6-diaminopimeloyl-D-alanyl-D-alanine + UDP + H(+). It functions in the pathway cell wall biogenesis; peptidoglycan biosynthesis. Functionally, cell wall formation. Catalyzes the transfer of a GlcNAc subunit on undecaprenyl-pyrophosphoryl-MurNAc-pentapeptide (lipid intermediate I) to form undecaprenyl-pyrophosphoryl-MurNAc-(pentapeptide)GlcNAc (lipid intermediate II). This Oceanobacillus iheyensis (strain DSM 14371 / CIP 107618 / JCM 11309 / KCTC 3954 / HTE831) protein is UDP-N-acetylglucosamine--N-acetylmuramyl-(pentapeptide) pyrophosphoryl-undecaprenol N-acetylglucosamine transferase.